A 155-amino-acid chain; its full sequence is Archaemetzincin (155 aa).

His109 contributes to the Zn(2+) binding site. The Proton acceptor role is filled by Glu110. Residues His113, His119, Cys120, Cys125, Cys144, and Cys147 each coordinate Zn(2+).

The protein belongs to the peptidase M54 family. In terms of assembly, monomer. Zn(2+) serves as cofactor.

Its function is as follows. Probable zinc metalloprotease whose natural substrate is unknown. The polypeptide is Archaemetzincin (Pyrobaculum aerophilum (strain ATCC 51768 / DSM 7523 / JCM 9630 / CIP 104966 / NBRC 100827 / IM2)).